The sequence spans 310 residues: L-lactate dehydrogenase (310 aa).

NAD(+)-binding residues include Val11, Asp32, and Arg37. Substrate-binding positions include Gln79, Arg85, and 117 to 120; that span reads NPVD. NAD(+) contacts are provided by residues 115–117 and Thr140; that span reads VTN. 145–148 lines the substrate pocket; the sequence is DTAR. Beta-D-fructose 1,6-bisphosphate is bound by residues Arg150 and His165. His172 acts as the Proton acceptor in catalysis. Position 221 is a phosphotyrosine (Tyr221). Residue Thr230 coordinates substrate.

The protein belongs to the LDH/MDH superfamily. LDH family. In terms of assembly, homotetramer.

It localises to the cytoplasm. The enzyme catalyses (S)-lactate + NAD(+) = pyruvate + NADH + H(+). It functions in the pathway fermentation; pyruvate fermentation to lactate; (S)-lactate from pyruvate: step 1/1. Allosterically activated by fructose 1,6-bisphosphate (FBP). In terms of biological role, catalyzes the conversion of lactate to pyruvate. This chain is L-lactate dehydrogenase, found in Fervidobacterium nodosum (strain ATCC 35602 / DSM 5306 / Rt17-B1).